The following is a 123-amino-acid chain: Putative iron-sulfur cluster insertion protein ErpA (123 aa).

3 residues coordinate iron-sulfur cluster: Cys-51, Cys-115, and Cys-117.

Belongs to the HesB/IscA family. Homodimer. The cofactor is iron-sulfur cluster.

Required for insertion of 4Fe-4S clusters. This Burkholderia cenocepacia (strain HI2424) protein is Putative iron-sulfur cluster insertion protein ErpA.